The sequence spans 75 residues: uncharacterized protein (75 aa).

Residues 19–38 (FHNTAPSKTNVNVPRANKSQ) show a composition bias toward polar residues. Residues 19-42 (FHNTAPSKTNVNVPRANKSQSKGK) form a disordered region. Residues 47–66 (LLVLVGTLALVTSVISVNYQ) traverse the membrane as a helical segment.

The protein localises to the membrane. This is an uncharacterized protein from Saccharomyces cerevisiae (strain ATCC 204508 / S288c) (Baker's yeast).